The sequence spans 388 residues: Succinate--CoA ligase [ADP-forming] subunit beta (388 aa).

An ATP-grasp domain is found at 9 to 244 (KQLFADYGLP…PSQEDPREAH (236 aa)). Residues Lys-46, 53–55 (GRG), Glu-99, Thr-102, and Glu-107 each bind ATP. Residues Asn-199 and Asp-213 each coordinate Mg(2+). Substrate-binding positions include Asn-264 and 321-323 (GIV).

It belongs to the succinate/malate CoA ligase beta subunit family. As to quaternary structure, heterotetramer of two alpha and two beta subunits. It depends on Mg(2+) as a cofactor.

The catalysed reaction is succinate + ATP + CoA = succinyl-CoA + ADP + phosphate. The enzyme catalyses GTP + succinate + CoA = succinyl-CoA + GDP + phosphate. The protein operates within carbohydrate metabolism; tricarboxylic acid cycle; succinate from succinyl-CoA (ligase route): step 1/1. Succinyl-CoA synthetase functions in the citric acid cycle (TCA), coupling the hydrolysis of succinyl-CoA to the synthesis of either ATP or GTP and thus represents the only step of substrate-level phosphorylation in the TCA. The beta subunit provides nucleotide specificity of the enzyme and binds the substrate succinate, while the binding sites for coenzyme A and phosphate are found in the alpha subunit. The polypeptide is Succinate--CoA ligase [ADP-forming] subunit beta (Hahella chejuensis (strain KCTC 2396)).